Reading from the N-terminus, the 202-residue chain is Cytochrome c oxidase assembly protein CtaG (202 aa).

The Cytoplasmic segment spans residues 1-13 (MSDKAAAPKKQGR). A helical; Signal-anchor for type II membrane protein transmembrane segment spans residues 14–36 (NNGAVVLMCLSFVFGMGAMSYAA). The Periplasmic portion of the chain corresponds to 37 to 202 (VPLYRIFCQV…GGAEKVEKKL (166 aa)). Residues 183-202 (EGPKPLASNEGGAEKVEKKL) form a disordered region.

This sequence belongs to the COX11/CtaG family.

The protein resides in the cell inner membrane. Its function is as follows. Exerts its effect at some terminal stage of cytochrome c oxidase synthesis, probably by being involved in the insertion of the copper B into subunit I. The protein is Cytochrome c oxidase assembly protein CtaG of Rhizobium etli (strain CIAT 652).